The sequence spans 458 residues: MSSKLATPLSIQGEVIYPDDSGFDAIANIWDGRHLQRPSLIARCLSAGDVAKSVRYACDNGLEISVRSGGHNPNGYATNDGGIVLDLRLMNSIHIDTAGSRARIGGGVISGDLVKEAAKFGLAAVTGMHPKVGFCGLALNGGVGFLTPKYGLASDNILGATLVTATGDVIYCSDDERPELFWAVRGAGPNFGVVTEVEVQLYELPRKMLAGFITWAPSVSELAGLLTSLLDALNEMADHIYPSVFVGVDENRAPSVTVCVGHLGGLDIAERDIARLRGLGRTVSDSIAVRSYDEVVALNAEVGSFEDGMSNLWIDREIAMPNARFAEAIAGNLDKFVSEPASGGSVKLEIEGMPFGNPKRTPARHRDAMGVLALAEWSGAAPGSEKYPELARELDAALLRAGVTTSGFGLLNNNSEVTAEMVAEVYKPEVYCRLAAVKREYDPENRFRHNYNIDPEGS.

Residues 33–204 form the FAD-binding PCMH-type domain; it reads RHLQRPSLIA…TEVEVQLYEL (172 aa). Residues 67-73, 129-130, 134-137, Gly144, Thr195, Asn413, and Asn450 each bind FAD; these read RSGGHNP, HP, and FCGL. His71 carries the pros-8alpha-FAD histidine modification.

Belongs to the oxygen-dependent FAD-linked oxidoreductase family. Monomer. FAD serves as cofactor.

Its subcellular location is the cytoplasm. The enzyme catalyses (R)-6-hydroxynicotine + O2 + H2O = 6-hydroxypseudooxynicotine + H2O2. It carries out the reaction (R)-6-hydroxynicotine + O2 = 6-hydroxy-N-methylmyosmine + H2O2. It functions in the pathway alkaloid degradation; nicotine degradation; 6-hydroxypseudooxynicotine from nicotine (R-isomer route): step 2/2. Inhibited by (S)-6-hydroxynicotine. Inhibited by high concentrations of phenanthroline. Functionally, involved in the degradation of D-nicotine. Catalyzes the oxidation of (R)-6-hydroxynicotine (6-hydroxy-D-nicotine) to 6-hydroxypseudooxynicotine. Oxidation of the pyrrolidine ring of (R)-6-hydroxynicotine leads to the formation of the optically inactive 6-hydroxy-N-methylmyosmine, which hydrolyzes spontaneously to 6-hydroxypseudooxynicotine. Acts with absolute stereospecificity on the D-form of 6-hydroxynicotine. Shows lower activity with (R)-6-hydroxynornicotine, and weak activity with (R)-4-(1-methylpyrrolidine-2-yl)phenol, (R)-6-chloronicotine and (R)-nicotine. In Paenarthrobacter nicotinovorans (Arthrobacter nicotinovorans), this protein is (R)-6-hydroxynicotine oxidase.